The chain runs to 425 residues: MVKIYIENYGCARNRADGEIMAALLHLAGHEIVYDPDEGEIVVVNSCAVKDPTERKIARRIKELLDSGKKVIVTGCLPHVNPDVIDERVSGILGVKSIDRIIQAVEYALRGEKLISVPDWRKRNLDKLDFPRLSPRTVYFIVPIAEGCLNACTYCATRFARGVLKSYSPEKIVGWVKWAIKQGYKEIWLSAEDTGCYGFDIGTNLAKLLDEITAIEGEFRVRVGMMNPNHVLKFLDELIEAYQDEKIYKFLHLPVQSGDNDILRRMGRNYTVEEFEEIVKEFRKKFPDLNLHTDIIVGFPGEDDEAFQRSVELIRRIRPDKVNVSRYSPRPGTIAAKWKQLPGWIVKERSRLLHRIRLQISYEINQKYIGKKVEVLIHGEGKKGNVDAVTMNYKHVILPFGNSGEFRIAEIKNATSTYLLGEVMS.

One can recognise an MTTase N-terminal domain in the interval 2-110 (VKIYIENYGC…IIQAVEYALR (109 aa)). Positions 11, 47, 76, 148, 152, and 155 each coordinate [4Fe-4S] cluster. In terms of domain architecture, Radical SAM core spans 133 to 363 (LSPRTVYFIV…HRIRLQISYE (231 aa)). The 60-residue stretch at 366–425 (QKYIGKKVEVLIHGEGKKGNVDAVTMNYKHVILPFGNSGEFRIAEIKNATSTYLLGEVMS) folds into the TRAM domain.

This sequence belongs to the methylthiotransferase family. CDKAL1 subfamily. The cofactor is [4Fe-4S] cluster.

It carries out the reaction N(6)-L-threonylcarbamoyladenosine(37) in tRNA + (sulfur carrier)-SH + AH2 + 2 S-adenosyl-L-methionine = 2-methylsulfanyl-N(6)-L-threonylcarbamoyladenosine(37) in tRNA + (sulfur carrier)-H + 5'-deoxyadenosine + L-methionine + A + S-adenosyl-L-homocysteine + 2 H(+). Functionally, catalyzes the methylthiolation of N6-threonylcarbamoyladenosine (t(6)A), leading to the formation of 2-methylthio-N6-threonylcarbamoyladenosine (ms(2)t(6)A) at position 37 in tRNAs that read codons beginning with adenine. The sequence is that of Probable threonylcarbamoyladenosine tRNA methylthiotransferase from Pyrococcus abyssi (strain GE5 / Orsay).